Reading from the N-terminus, the 127-residue chain is Longitudinals lacking protein-like (127 aa).

The 66-residue stretch at 33 to 98 (TDVTLACEGQ…MYAGEVNVSQ (66 aa)) folds into the BTB domain.

The BTB domain interacts with the BTB domain of Trl in vitro. Found in a Pc-containing complex.

It is found in the nucleus. Functionally, required, together with Trl, for maintaining the repressed state of target genes including homeotic genes Scr and Ubx. May also be involved in the activation of homeotic genes. Binds to a DNA Polycomb response element (PRE) at the bithorax complex. Also binds to polytene chromosomes at several hundred sites, many of which are shared with Trl and ph-p. Required during embryonic development. The sequence is that of Longitudinals lacking protein-like from Drosophila melanogaster (Fruit fly).